Reading from the N-terminus, the 310-residue chain is Putative HTH-type transcriptional regulatory protein SSO0942 (310 aa).

The HTH cro/C1-type domain occupies Leu125–Val180. The H-T-H motif DNA-binding region spans Ile136 to Lys155.

The protein is Putative HTH-type transcriptional regulatory protein SSO0942 of Saccharolobus solfataricus (strain ATCC 35092 / DSM 1617 / JCM 11322 / P2) (Sulfolobus solfataricus).